We begin with the raw amino-acid sequence, 165 residues long: Regulator of ribonuclease activity A (165 aa).

This sequence belongs to the RraA family. Homotrimer. Binds to both RNA-binding sites in the C-terminal region of Rne and to RhlB.

It localises to the cytoplasm. Functionally, globally modulates RNA abundance by binding to RNase E (Rne) and regulating its endonucleolytic activity. Can modulate Rne action in a substrate-dependent manner by altering the composition of the degradosome. Modulates RNA-binding and helicase activities of the degradosome. The protein is Regulator of ribonuclease activity A of Actinobacillus pleuropneumoniae serotype 5b (strain L20).